Here is a 529-residue protein sequence, read N- to C-terminus: Peptide chain release factor 3 (529 aa).

A tr-type G domain is found at 11-280 (AKRRTFAIIS…GLVEWAPAPM (270 aa)). Residues 20 to 27 (SHPDAGKT), 88 to 92 (DTPGH), and 142 to 145 (NKLD) each bind GTP.

Belongs to the TRAFAC class translation factor GTPase superfamily. Classic translation factor GTPase family. PrfC subfamily.

Its subcellular location is the cytoplasm. Functionally, increases the formation of ribosomal termination complexes and stimulates activities of RF-1 and RF-2. It binds guanine nucleotides and has strong preference for UGA stop codons. It may interact directly with the ribosome. The stimulation of RF-1 and RF-2 is significantly reduced by GTP and GDP, but not by GMP. The chain is Peptide chain release factor 3 from Yersinia pseudotuberculosis serotype O:1b (strain IP 31758).